The following is a 280-amino-acid chain: Energy-coupling factor transporter ATP-binding protein EcfA1 (280 aa).

Positions 6–241 (LRTENISFQY…SHMLQEIGLD (236 aa)) constitute an ABC transporter domain. ATP is bound at residue 40–47 (GQNGSGKS).

Belongs to the ABC transporter superfamily. Energy-coupling factor EcfA family. Forms a stable energy-coupling factor (ECF) transporter complex composed of 2 membrane-embedded substrate-binding proteins (S component), 2 ATP-binding proteins (A component) and 2 transmembrane proteins (T component).

Its subcellular location is the cell membrane. Its function is as follows. ATP-binding (A) component of a common energy-coupling factor (ECF) ABC-transporter complex. Unlike classic ABC transporters this ECF transporter provides the energy necessary to transport a number of different substrates. In Bacillus cereus (strain ATCC 10987 / NRS 248), this protein is Energy-coupling factor transporter ATP-binding protein EcfA1.